Consider the following 283-residue polypeptide: Methylamine utilization protein MauF (283 aa).

The next 7 membrane-spanning stretches (helical) occupy residues 37-57 (FALM…LHSA), 58-78 (MSAT…GGFL), 116-136 (GYAI…WLLF), 143-163 (YMVA…FGFM), 187-207 (IGLL…QTPI), 210-230 (IVTG…IIGI), and 263-283 (VEVD…LLVL).

It localises to the cell membrane. It functions in the pathway one-carbon metabolism; methylamine degradation. The chain is Methylamine utilization protein MauF (mauF) from Methylobacillus flagellatus (strain ATCC 51484 / DSM 6875 / VKM B-1610 / KT).